Here is a 193-residue protein sequence, read N- to C-terminus: MKASTVLQIAYLVSQESKCCSWKVGAVIEKNGRIISTGYNGSPAGGVNCCDYAAEQGWLLNKPKHAIIQGHKPECVSFGSTDRFVLAKEHRSAHSEWSSKNEIHAELNAILFAARNGSSIEGATMYVTLSPCPDCAKAIAQSGIKKLVYCETYDKNKPGWDDILRNAGIEVFNVPKKNLNKLNWENINEFCGE.

In terms of domain architecture, CMP/dCMP-type deaminase spans 1–171 (MKASTVLQIA…DILRNAGIEV (171 aa)). Zn(2+) is bound by residues cysteine 19, cysteine 49, histidine 94, glutamate 102, and histidine 104. Residue glutamate 106 is the Proton donor of the active site. Residues cysteine 132 and cysteine 135 each contribute to the Zn(2+) site. Residue tyrosine 153 coordinates substrate.

This sequence belongs to the cytidine and deoxycytidylate deaminase family. Homohexamer. The cofactor is Zn(2+).

The enzyme catalyses dCMP + H2O + H(+) = dUMP + NH4(+). Its activity is regulated as follows. Allosteric enzyme whose activity is greatly influenced by the end products of its metabolic pathway, dCTP and dTTP. In terms of biological role, supplies the nucleotide substrate for thymidylate synthetase. The chain is Deoxycytidylate deaminase (CD) from Escherichia coli (Bacteriophage T4).